A 546-amino-acid chain; its full sequence is Chaperonin GroEL (546 aa).

ATP contacts are provided by residues 29 to 32 (TMGP), K50, 86 to 90 (DGTTT), G414, and D492.

It belongs to the chaperonin (HSP60) family. In terms of assembly, forms a cylinder of 14 subunits composed of two heptameric rings stacked back-to-back. Interacts with the co-chaperonin GroES.

It localises to the cytoplasm. It carries out the reaction ATP + H2O + a folded polypeptide = ADP + phosphate + an unfolded polypeptide.. Its function is as follows. Together with its co-chaperonin GroES, plays an essential role in assisting protein folding. The GroEL-GroES system forms a nano-cage that allows encapsulation of the non-native substrate proteins and provides a physical environment optimized to promote and accelerate protein folding. The sequence is that of Chaperonin GroEL from Helicobacter acinonychis (strain Sheeba).